A 94-amino-acid polypeptide reads, in one-letter code: Co-chaperonin GroES (94 aa).

The protein belongs to the GroES chaperonin family. In terms of assembly, heptamer of 7 subunits arranged in a ring. Interacts with the chaperonin GroEL.

It is found in the cytoplasm. Together with the chaperonin GroEL, plays an essential role in assisting protein folding. The GroEL-GroES system forms a nano-cage that allows encapsulation of the non-native substrate proteins and provides a physical environment optimized to promote and accelerate protein folding. GroES binds to the apical surface of the GroEL ring, thereby capping the opening of the GroEL channel. This Parageobacillus thermoglucosidasius (Geobacillus thermoglucosidasius) protein is Co-chaperonin GroES.